Here is a 269-residue protein sequence, read N- to C-terminus: MMSRRKFLLLTGAAAAGAILTPQISAKTQFIESPEEVREKRRWAMAVDVERCTQCMEELIAKTGDEKIKPPCVVACDKENNVPEFEEERFDPQWMRIAKLKLDKPEVNPKEYYIPLLCNHCEHPPCVQVCLTKASFKRPDGIVEIDMHRCIGCRYCMIACPYGARCFNFIDPREGLKEVNPNVQMRTEGVVEKCTFCVHRIDEAVKKGEEPIPACVEACHKYGKGALVFGNIKDPNSEISKILRENIVVQLRANLGTDPHVFYAKLGGE.

The segment at residues 1 to 26 (MMSRRKFLLLTGAAAAGAILTPQISA) is a signal peptide (tat-type signal). Residues C52, C55, C72, C76, C118, C121, C126, C130, C150, C153, C156, C160, C194, C197, C215, and C219 each contribute to the [4Fe-4S] cluster site. Positions 141–170 (GIVEIDMHRCIGCRYCMIACPYGARCFNFI) constitute a 4Fe-4S ferredoxin-type domain.

As to quaternary structure, consists of five subunits: an integral membrane subunit, a cytochrome b-like subunit, a cytochrome c subunit and two iron-sulfur subunits. The cofactor is [4Fe-4S] cluster. Post-translationally, predicted to be exported by the Tat system. The position of the signal peptide cleavage has been experimentally proven.

It is found in the cell membrane. In terms of biological role, has menaquinol-oxidizing activity. HmeA, HmeB and HmeE subunits may together catalyze electron transfer from menaquinol to cytochrome c. The sequence is that of Hdr-like menaquinol oxidoreductase iron-sulfur subunit 1 (hmeA) from Archaeoglobus fulgidus (strain ATCC 49558 / DSM 4304 / JCM 9628 / NBRC 100126 / VC-16).